The chain runs to 260 residues: 3'-5' ssDNA/RNA exonuclease TatD (260 aa).

A divalent metal cation is bound by residues E91, H127, and H152.

This sequence belongs to the metallo-dependent hydrolases superfamily. TatD-type hydrolase family. TatD subfamily. Monomer. Mg(2+) is required as a cofactor. Requires Mn(2+) as cofactor.

The protein resides in the cytoplasm. 3'-5' exonuclease that prefers single-stranded DNA and RNA. May play a role in the H(2)O(2)-induced DNA damage repair. The chain is 3'-5' ssDNA/RNA exonuclease TatD from Escherichia coli (strain K12).